Reading from the N-terminus, the 124-residue chain is Small ribosomal subunit protein uS12 (124 aa).

Positions 1 to 20 (MPTIQQLVRKGRTPKVVKTK) are disordered. Over residues 9–18 (RKGRTPKVVK) the composition is skewed to basic residues. 3-methylthioaspartic acid is present on aspartate 89.

This sequence belongs to the universal ribosomal protein uS12 family. Part of the 30S ribosomal subunit. Contacts proteins S8 and S17. May interact with IF1 in the 30S initiation complex.

Functionally, with S4 and S5 plays an important role in translational accuracy. In terms of biological role, interacts with and stabilizes bases of the 16S rRNA that are involved in tRNA selection in the A site and with the mRNA backbone. Located at the interface of the 30S and 50S subunits, it traverses the body of the 30S subunit contacting proteins on the other side and probably holding the rRNA structure together. The combined cluster of proteins S8, S12 and S17 appears to hold together the shoulder and platform of the 30S subunit. The polypeptide is Small ribosomal subunit protein uS12 (Clavibacter michiganensis subsp. michiganensis (strain NCPPB 382)).